Reading from the N-terminus, the 286-residue chain is Orotidine 5'-phosphate decarboxylase (286 aa).

Residue Lys-97 is the Proton donor of the active site.

The protein belongs to the OMP decarboxylase family. Type 2 subfamily.

The enzyme catalyses orotidine 5'-phosphate + H(+) = UMP + CO2. Its pathway is pyrimidine metabolism; UMP biosynthesis via de novo pathway; UMP from orotate: step 2/2. The chain is Orotidine 5'-phosphate decarboxylase (pyrF) from Clostridium acetobutylicum (strain ATCC 824 / DSM 792 / JCM 1419 / IAM 19013 / LMG 5710 / NBRC 13948 / NRRL B-527 / VKM B-1787 / 2291 / W).